A 329-amino-acid chain; its full sequence is MTESRWYSTSPPAKLNLFLELLARRDDGFHELDTVMVAIDWRDELHVRRTTNPGVQLSVDWTDGRTSVAAELQVDEDNELLLVPTDDKNLVVRALNRLTETLRLDGGWEVQLNKNIPSGAGMGGASSDAASALQLGWAAARETQSDLPETLKNETLLSLAAEIGSDVPFFLGDLQADRLVQCAHATGRGEKLNFFTLANPLHAVVIYPAASVSTAQVYSRCQVPDSPQSSNELLRALQGIAAESEFSLHNALQAPARGLSSRIDPALECLSKAGLTHCHMTGSGSACFALADSSQQAAIAAETLRSTFPGGALIRPVMSCVVPSEIHIA.

Residue K14 is part of the active site. Position 117–127 (117–127 (PSGAGMGGASS)) interacts with ATP. The active site involves D166.

The protein belongs to the GHMP kinase family. IspE subfamily.

It catalyses the reaction 4-CDP-2-C-methyl-D-erythritol + ATP = 4-CDP-2-C-methyl-D-erythritol 2-phosphate + ADP + H(+). Its pathway is isoprenoid biosynthesis; isopentenyl diphosphate biosynthesis via DXP pathway; isopentenyl diphosphate from 1-deoxy-D-xylulose 5-phosphate: step 3/6. Catalyzes the phosphorylation of the position 2 hydroxy group of 4-diphosphocytidyl-2C-methyl-D-erythritol. This chain is 4-diphosphocytidyl-2-C-methyl-D-erythritol kinase, found in Rhodopirellula baltica (strain DSM 10527 / NCIMB 13988 / SH1).